The primary structure comprises 189 residues: Elongation factor P (189 aa).

The protein belongs to the elongation factor P family.

The protein resides in the cytoplasm. Its pathway is protein biosynthesis; polypeptide chain elongation. In terms of biological role, involved in peptide bond synthesis. Stimulates efficient translation and peptide-bond synthesis on native or reconstituted 70S ribosomes in vitro. Probably functions indirectly by altering the affinity of the ribosome for aminoacyl-tRNA, thus increasing their reactivity as acceptors for peptidyl transferase. The chain is Elongation factor P from Rhizobium leguminosarum bv. trifolii (strain WSM2304).